A 210-amino-acid polypeptide reads, in one-letter code: Pyridoxine/pyridoxamine 5'-phosphate oxidase (210 aa).

Substrate contacts are provided by residues 7 to 10 and lysine 65; that span reads RDEY. Residues 60–65, 75–76, arginine 81, lysine 82, and glutamine 104 each bind FMN; these read RMVLLK and FT. Substrate is bound by residues tyrosine 122, arginine 126, and serine 130. FMN-binding positions include 139–140 and tryptophan 183; that span reads QS. 189 to 191 contacts substrate; the sequence is RLH. FMN is bound at residue arginine 193.

Belongs to the pyridoxamine 5'-phosphate oxidase family. As to quaternary structure, homodimer. The cofactor is FMN.

It catalyses the reaction pyridoxamine 5'-phosphate + O2 + H2O = pyridoxal 5'-phosphate + H2O2 + NH4(+). The enzyme catalyses pyridoxine 5'-phosphate + O2 = pyridoxal 5'-phosphate + H2O2. The protein operates within cofactor metabolism; pyridoxal 5'-phosphate salvage; pyridoxal 5'-phosphate from pyridoxamine 5'-phosphate: step 1/1. Its pathway is cofactor metabolism; pyridoxal 5'-phosphate salvage; pyridoxal 5'-phosphate from pyridoxine 5'-phosphate: step 1/1. Functionally, catalyzes the oxidation of either pyridoxine 5'-phosphate (PNP) or pyridoxamine 5'-phosphate (PMP) into pyridoxal 5'-phosphate (PLP). This chain is Pyridoxine/pyridoxamine 5'-phosphate oxidase, found in Haemophilus influenzae (strain 86-028NP).